We begin with the raw amino-acid sequence, 273 residues long: 2,3,4,5-tetrahydropyridine-2,6-dicarboxylate N-succinyltransferase (273 aa).

Residues arginine 104 and aspartate 141 each contribute to the substrate site.

Belongs to the transferase hexapeptide repeat family. In terms of assembly, homotrimer.

Its subcellular location is the cytoplasm. The catalysed reaction is (S)-2,3,4,5-tetrahydrodipicolinate + succinyl-CoA + H2O = (S)-2-succinylamino-6-oxoheptanedioate + CoA. The protein operates within amino-acid biosynthesis; L-lysine biosynthesis via DAP pathway; LL-2,6-diaminopimelate from (S)-tetrahydrodipicolinate (succinylase route): step 1/3. The polypeptide is 2,3,4,5-tetrahydropyridine-2,6-dicarboxylate N-succinyltransferase (Nitrosospira multiformis (strain ATCC 25196 / NCIMB 11849 / C 71)).